The chain runs to 320 residues: Small ribosomal subunit protein uS2 (320 aa).

The span at 1–22 (MADETTTDTPDVQDEDAPDEDA) shows a compositional bias: acidic residues. The disordered stretch occupies residues 1-83 (MADETTTDTP…SSSEEETSHR (83 aa)). Positions 27-41 (DDTASDSTGEAAAAD) are enriched in low complexity. Acidic residues-rich tracts occupy residues 42 to 57 (TDAD…EDAP) and 65 to 78 (DDGD…SSEE).

The protein belongs to the universal ribosomal protein uS2 family.

The polypeptide is Small ribosomal subunit protein uS2 (Salinibacter ruber (strain DSM 13855 / M31)).